Here is a 506-residue protein sequence, read N- to C-terminus: Zinc finger protein MAGPIE (506 aa).

A disordered region spans residues 1-53 (MTTEDQTISSSGGYVQSSSTTDHVDHHHHDQHESLNPPLVKKKRNLPGNPDPE). The span at 9–21 (SSSGGYVQSSSTT) shows a compositional bias: low complexity. Positions 22 to 33 (DHVDHHHHDQHE) are enriched in basic and acidic residues. Ser60 bears the Phosphoserine mark. 2 C2H2-type zinc fingers span residues 70-92 (FLCE…RRGH) and 111-141 (YVCP…CRKH). The Nuclear localization signal signature appears at 133 to 140 (IKKHFCRK). The segment at 146–169 (WKCEKCAKRYAVQSDWKAHSKTCG) adopts a C2H2-type 2; degenerate zinc-finger fold. Residues Cys148, Cys151, His164, Cys168, Cys175, Cys177, His190, and Cys194 each coordinate Zn(2+). The CCHC-type 2; atypical zinc finger occupies 173 to 196 (YRCDCGTIFSRRDSFITHRAFCDA). An SHR-binding region spans residues 183 to 195 (RRDSFITHRAFCD).

Interacts with SHR, SCR and JKD, but not with itself. Interacts with SIEL. Binds to RGA and SCL3 competitively in the nucleus. As to expression, expressed in the ground tissue and stele cells of embryos and 2-days post-germination roots but not in the quiescent center. Detected only in cells that perform asymmetric cell divisions. In roots, present in cortex, endodermis, and pericycle layer.

Its subcellular location is the nucleus. Its function is as follows. Transcription factor that regulates tissue boundaries and asymmetric cell division. Contributes to the sequestration of 'SHORT-ROOT' to the nucleus. Interacts with the SCR and MGP promoters. Does not show transcription activity by itself, but regulates the transcription of downstream genes through interaction with other transcription factors. Binds DNA via its zinc fingers. Recognizes and binds to SCL3 promoter sequence 5'-AGACAA-3' to promote its expression when in complex with RGA. Positively involved in gibberellic acid (GA) signaling. The sequence is that of Zinc finger protein MAGPIE from Arabidopsis thaliana (Mouse-ear cress).